We begin with the raw amino-acid sequence, 599 residues long: Elongation factor 4 (599 aa).

A tr-type G domain is found at 2-184 (KNIRNFSIIA…RLVRDIPPPQ (183 aa)). Residues 14 to 19 (DHGKST) and 131 to 134 (NKID) each bind GTP.

Belongs to the TRAFAC class translation factor GTPase superfamily. Classic translation factor GTPase family. LepA subfamily.

The protein localises to the cell inner membrane. The catalysed reaction is GTP + H2O = GDP + phosphate + H(+). Its function is as follows. Required for accurate and efficient protein synthesis under certain stress conditions. May act as a fidelity factor of the translation reaction, by catalyzing a one-codon backward translocation of tRNAs on improperly translocated ribosomes. Back-translocation proceeds from a post-translocation (POST) complex to a pre-translocation (PRE) complex, thus giving elongation factor G a second chance to translocate the tRNAs correctly. Binds to ribosomes in a GTP-dependent manner. The chain is Elongation factor 4 from Salmonella gallinarum (strain 287/91 / NCTC 13346).